A 171-amino-acid polypeptide reads, in one-letter code: Large ribosomal subunit protein uL10 (171 aa).

Belongs to the universal ribosomal protein uL10 family. Part of the ribosomal stalk of the 50S ribosomal subunit. The N-terminus interacts with L11 and the large rRNA to form the base of the stalk. The C-terminus forms an elongated spine to which L12 dimers bind in a sequential fashion forming a multimeric L10(L12)X complex.

Forms part of the ribosomal stalk, playing a central role in the interaction of the ribosome with GTP-bound translation factors. This chain is Large ribosomal subunit protein uL10, found in Corynebacterium jeikeium (strain K411).